The sequence spans 135 residues: Holo-[acyl-carrier-protein] synthase (135 aa).

The Mg(2+) site is built by Asp8 and Glu57.

This sequence belongs to the P-Pant transferase superfamily. AcpS family. It depends on Mg(2+) as a cofactor.

It localises to the cytoplasm. It carries out the reaction apo-[ACP] + CoA = holo-[ACP] + adenosine 3',5'-bisphosphate + H(+). Its function is as follows. Transfers the 4'-phosphopantetheine moiety from coenzyme A to a Ser of acyl-carrier-protein. The polypeptide is Holo-[acyl-carrier-protein] synthase (Methylobacterium sp. (strain 4-46)).